The sequence spans 877 residues: Lipophilic envelope-spanning tunnel protein B (877 aa).

The Cytoplasmic segment spans residues 1–19 (MSQETPASTTEAQIKNKRR). Residues 20–40 (ISPFWLLPFIALMIASWLIWD) traverse the membrane as a helical segment. The Periplasmic portion of the chain corresponds to 41–877 (SYQDRGNTVT…WREWGTALPK (837 aa)). 7 MCE/MlaD regions span residues 46–149 (GNTV…VALD), 160–272 (DLMI…GLYE), 279–382 (RGVI…VVPG), 391–499 (DVLT…PLYA), 515–625 (TTVS…ILYA), 634–737 (GGQI…LQEA), and 746–862 (DGLS…LLQE).

Belongs to the PqiB family. As to quaternary structure, homohexamer. May interact with LetA in the inner membrane. May also interact with partners in the outer membrane.

Its subcellular location is the cell inner membrane. Functionally, forms a tunnel that spans the entire periplasmic space. Is probably involved in the transport of lipids between the inner membrane and the outer membrane through the tunnel. Forms a dynamic tunnel sufficiently long to mediate lipid transport directly between the two membranes without the need for a shuttle protein. Binds phospholipids. Lipids bind inside the tunnel. Required for outer membrane homeostasis. Contributes to membrane integrity. In Escherichia coli (strain K12), this protein is Lipophilic envelope-spanning tunnel protein B.